The chain runs to 373 residues: NADH-quinone oxidoreductase subunit D (373 aa).

This sequence belongs to the complex I 49 kDa subunit family. In terms of assembly, NDH-1 is composed of 14 different subunits. Subunits NuoB, C, D, E, F, and G constitute the peripheral sector of the complex.

It localises to the cell inner membrane. It catalyses the reaction a quinone + NADH + 5 H(+)(in) = a quinol + NAD(+) + 4 H(+)(out). Functionally, NDH-1 shuttles electrons from NADH, via FMN and iron-sulfur (Fe-S) centers, to quinones in the respiratory chain. The immediate electron acceptor for the enzyme in this species is believed to be ubiquinone. Couples the redox reaction to proton translocation (for every two electrons transferred, four hydrogen ions are translocated across the cytoplasmic membrane), and thus conserves the redox energy in a proton gradient. This chain is NADH-quinone oxidoreductase subunit D, found in Syntrophobacter fumaroxidans (strain DSM 10017 / MPOB).